A 335-amino-acid polypeptide reads, in one-letter code: Biotin synthase (335 aa).

One can recognise a Radical SAM core domain in the interval Tyr43–Ala269. [4Fe-4S] cluster contacts are provided by Cys61, Cys65, and Cys68. Positions 104, 137, 197, and 267 each coordinate [2Fe-2S] cluster.

Belongs to the radical SAM superfamily. Biotin synthase family. In terms of assembly, homodimer. [4Fe-4S] cluster is required as a cofactor. The cofactor is [2Fe-2S] cluster.

It carries out the reaction (4R,5S)-dethiobiotin + (sulfur carrier)-SH + 2 reduced [2Fe-2S]-[ferredoxin] + 2 S-adenosyl-L-methionine = (sulfur carrier)-H + biotin + 2 5'-deoxyadenosine + 2 L-methionine + 2 oxidized [2Fe-2S]-[ferredoxin]. The protein operates within cofactor biosynthesis; biotin biosynthesis; biotin from 7,8-diaminononanoate: step 2/2. Catalyzes the conversion of dethiobiotin (DTB) to biotin by the insertion of a sulfur atom into dethiobiotin via a radical-based mechanism. The protein is Biotin synthase of Staphylococcus aureus (strain MSSA476).